The following is a 156-amino-acid chain: Dihydrofolate reductase (156 aa).

In terms of domain architecture, DHFR spans methionine 1 to lysine 156.

It belongs to the dihydrofolate reductase family.

The catalysed reaction is (6S)-5,6,7,8-tetrahydrofolate + NADP(+) = 7,8-dihydrofolate + NADPH + H(+). It participates in cofactor biosynthesis; tetrahydrofolate biosynthesis; 5,6,7,8-tetrahydrofolate from 7,8-dihydrofolate: step 1/1. Functionally, key enzyme in folate metabolism. Catalyzes an essential reaction for de novo glycine and purine synthesis, and for DNA precursor synthesis. This chain is Dihydrofolate reductase (folA), found in Ureaplasma parvum serovar 3 (strain ATCC 700970).